Reading from the N-terminus, the 401-residue chain is Elongation factor Tu 2 (401 aa).

In terms of domain architecture, tr-type G spans 10 to 209 (KPHVNVGTIG…AVDEYIPTPV (200 aa)). Residues 19 to 26 (GHVDHGKT) form a G1 region. 19-26 (GHVDHGKT) provides a ligand contact to GTP. Threonine 26 contacts Mg(2+). The G2 stretch occupies residues 60–64 (GITIA). Positions 81-84 (DCPG) are G3. Residues 81 to 85 (DCPGH) and 136 to 139 (NKVD) each bind GTP. The tract at residues 136–139 (NKVD) is G4. Residues 174–176 (SAL) are G5.

Belongs to the TRAFAC class translation factor GTPase superfamily. Classic translation factor GTPase family. EF-Tu/EF-1A subfamily. In terms of assembly, monomer.

The protein resides in the cytoplasm. The catalysed reaction is GTP + H2O = GDP + phosphate + H(+). GTP hydrolase that promotes the GTP-dependent binding of aminoacyl-tRNA to the A-site of ribosomes during protein biosynthesis. The polypeptide is Elongation factor Tu 2 (Roseiflexus sp. (strain RS-1)).